The following is a 183-amino-acid chain: TATA-box-binding protein 1 (183 aa).

Repeat copies occupy residues 8–84 (IENV…AKKL) and 99–177 (VQNI…RQQL).

The protein belongs to the TBP family.

General factor that plays a role in the activation of archaeal genes transcribed by RNA polymerase. Binds specifically to the TATA box promoter element which lies close to the position of transcription initiation. This chain is TATA-box-binding protein 1, found in Methanosarcina acetivorans (strain ATCC 35395 / DSM 2834 / JCM 12185 / C2A).